Reading from the N-terminus, the 409-residue chain is Peptidase T (409 aa).

His-80 contacts Zn(2+). Residue Asp-82 is part of the active site. Asp-143 is a binding site for Zn(2+). Glu-177 (proton acceptor) is an active-site residue. Residues Glu-178, Asp-200, and His-382 each coordinate Zn(2+).

Belongs to the peptidase M20B family. Zn(2+) serves as cofactor.

The protein resides in the cytoplasm. It catalyses the reaction Release of the N-terminal residue from a tripeptide.. Functionally, cleaves the N-terminal amino acid of tripeptides. The chain is Peptidase T from Enterococcus faecalis (strain ATCC 700802 / V583).